The primary structure comprises 533 residues: Beta-glucosidase 24 (533 aa).

The N-terminal stretch at 1-26 (MVLQKLPLMSIGLLWLLIIVGPLVNA) is a signal peptide. Q58 serves as a coordination point for a beta-D-glucoside. 2 N-linked (GlcNAc...) asparagine glycosylation sites follow: N64 and N88. Residues H161 and 206–207 (NE) contribute to the a beta-D-glucoside site. Residue E207 is the Proton donor of the active site. C226 and C239 are disulfide-bonded. Residue Y355 coordinates a beta-D-glucoside. An N-linked (GlcNAc...) asparagine glycan is attached at N388. Position 427 (E427) interacts with a beta-D-glucoside. E427 (nucleophile) is an active-site residue. Residues N437, N442, and N470 are each glycosylated (N-linked (GlcNAc...) asparagine). Residues W477, 484 to 485 (EW), and F493 each bind a beta-D-glucoside. A glycan (N-linked (GlcNAc...) asparagine) is linked at N503. A Prevents secretion from ER motif is present at residues 530 to 533 (KDEL).

Belongs to the glycosyl hydrolase 1 family.

The protein localises to the endoplasmic reticulum lumen. It carries out the reaction Hydrolysis of terminal, non-reducing beta-D-glucosyl residues with release of beta-D-glucose.. This chain is Beta-glucosidase 24, found in Arabidopsis thaliana (Mouse-ear cress).